Here is a 520-residue protein sequence, read N- to C-terminus: Chaperone Ric-8B (520 aa).

A Phosphoserine modification is found at S468. Position 473 is a phosphothreonine (T473).

It belongs to the synembryn family. In terms of assembly, interacts with GDP-bound G(s) G-alpha proteins GNAL and GNAS. Does not interact with G-alpha proteins when they are in complex with subunits beta and gamma. As to expression, predominantly expressed in the mature olfactory sensory neurons and also in a few regions in the brain.

The protein resides in the cytoplasm. The protein localises to the cell cortex. Functionally, chaperone that specifically binds and folds nascent G(s) G-alpha proteins (GNAS and GNAL) prior to G protein heterotrimer formation, promoting their association with the plasma membrane. Also acts as a guanine nucleotide exchange factor (GEF) for G(s) proteins by stimulating exchange of bound GDP for free GTP. Acts as an important component for odorant signal transduction by mediating GNAL (G(olf)-alpha) folding, thereby promoting-dependent cAMP accumulation in olfactory sensory neurons. In Mus musculus (Mouse), this protein is Chaperone Ric-8B.